Here is a 116-residue protein sequence, read N- to C-terminus: Ribosome-binding factor A (116 aa).

Belongs to the RbfA family. In terms of assembly, monomer. Binds 30S ribosomal subunits, but not 50S ribosomal subunits or 70S ribosomes.

It localises to the cytoplasm. In terms of biological role, one of several proteins that assist in the late maturation steps of the functional core of the 30S ribosomal subunit. Associates with free 30S ribosomal subunits (but not with 30S subunits that are part of 70S ribosomes or polysomes). Required for efficient processing of 16S rRNA. May interact with the 5'-terminal helix region of 16S rRNA. The protein is Ribosome-binding factor A of Ureaplasma urealyticum serovar 10 (strain ATCC 33699 / Western).